The primary structure comprises 133 residues: Phosphoribosyl-AMP cyclohydrolase (133 aa).

Asp82 is a Mg(2+) binding site. Position 83 (Cys83) interacts with Zn(2+). Mg(2+)-binding residues include Asp84 and Asp86. Residues Cys99 and Cys106 each coordinate Zn(2+).

This sequence belongs to the PRA-CH family. In terms of assembly, homodimer. It depends on Mg(2+) as a cofactor. Requires Zn(2+) as cofactor.

It is found in the cytoplasm. It carries out the reaction 1-(5-phospho-beta-D-ribosyl)-5'-AMP + H2O = 1-(5-phospho-beta-D-ribosyl)-5-[(5-phospho-beta-D-ribosylamino)methylideneamino]imidazole-4-carboxamide. It participates in amino-acid biosynthesis; L-histidine biosynthesis; L-histidine from 5-phospho-alpha-D-ribose 1-diphosphate: step 3/9. Catalyzes the hydrolysis of the adenine ring of phosphoribosyl-AMP. This Rhodospirillum centenum (strain ATCC 51521 / SW) protein is Phosphoribosyl-AMP cyclohydrolase.